We begin with the raw amino-acid sequence, 622 residues long: Pentatricopeptide repeat-containing protein At5g06540 (622 aa).

PPR repeat units lie at residues Asn81–Pro115, Asp116–Asn150, Asp151–Arg181, Asp182–Arg212, Asn213–Ala247, Asn248–Val282, Asn283–Thr313, Asp314–Pro348, Arg349–Pro384, and Arg385–Pro419. Residues Ile420 to Asp495 form a type E motif region. The segment at Gly496–Arg527 is type E(+) motif. The tract at residues Leu528–Trp622 is type DYW motif.

The protein belongs to the PPR family. PCMP-H subfamily.

This chain is Pentatricopeptide repeat-containing protein At5g06540 (PCMP-H88), found in Arabidopsis thaliana (Mouse-ear cress).